The following is a 796-amino-acid chain: DNA damage-responsive transcriptional repressor RPH1 (796 aa).

In terms of domain architecture, JmjN spans 14 to 55; it reads VPVFKPTYEQFEDFYAYCKAINKYGMKSGVVKVIPPKEWKDK. Residues 193-355 form the JmjC domain; it reads PEGLNVWNVA…IGKKAGKCHC (163 aa). T399 is modified (phosphothreonine). 6 positions are modified to phosphoserine: S430, S459, S557, S561, S575, and S584. The Bipartite nuclear localization signal signature appears at 455 to 471; the sequence is KRISSFQEQPLNKLLKR. Residues 599–692 form a disordered region; that stretch reads RQQHSQQHSF…DKEQGSSPLN (94 aa). Positions 601-621 are enriched in polar residues; sequence QHSQQHSFSTPSTVSNLSTSV. The segment covering 629–640 has biased composition (basic and acidic residues); that stretch reads NDIKTPHPERPN. Phosphoserine is present on S652. Polar residues predominate over residues 654–669; sequence VETSKSNLILSKVAST. The span at 670–686 shows a compositional bias: basic and acidic residues; the sequence is RQEDSFTSRNDDLDKEQ. S689 carries the post-translational modification Phosphoserine. Residues 709-732 form a C2H2-type 1 zinc finger; it reads YICKECQRKFSSGHHLTRHKKSVH. A C2H2-type 2; atypical zinc finger spans residues 738 to 763; the sequence is HSCPKCGKRFKRRDHVLQHLNKKIPC. A disordered region spans residues 774-796; the sequence is IMNPTVQPQDGKAAINQQSTPLN.

RAD53-dependent phosphorylated in response to DNA damage.

Its subcellular location is the nucleus. Functionally, transcriptional repressor of photolyase PHR1. Recognizes and binds the sequence AG(4) in the upstream repressing sequence of PHR1. Derepresses PHR1 transcription when phosphorylated. This chain is DNA damage-responsive transcriptional repressor RPH1 (RPH1), found in Saccharomyces cerevisiae (strain ATCC 204508 / S288c) (Baker's yeast).